Reading from the N-terminus, the 81-residue chain is Photosystem I iron-sulfur center (81 aa).

4Fe-4S ferredoxin-type domains lie at 2 to 31 (SHSV…MVSW) and 39 to 68 (IASA…VRVY). Residues cysteine 11, cysteine 14, cysteine 17, cysteine 21, cysteine 48, cysteine 51, cysteine 54, and cysteine 58 each coordinate [4Fe-4S] cluster.

In terms of assembly, the eukaryotic PSI reaction center is composed of at least 11 subunits. [4Fe-4S] cluster is required as a cofactor.

Its subcellular location is the plastid. The protein localises to the chloroplast thylakoid membrane. It carries out the reaction reduced [plastocyanin] + hnu + oxidized [2Fe-2S]-[ferredoxin] = oxidized [plastocyanin] + reduced [2Fe-2S]-[ferredoxin]. In terms of biological role, apoprotein for the two 4Fe-4S centers FA and FB of photosystem I (PSI); essential for photochemical activity. FB is the terminal electron acceptor of PSI, donating electrons to ferredoxin. The C-terminus interacts with PsaA/B/D and helps assemble the protein into the PSI complex. Required for binding of PsaD and PsaE to PSI. PSI is a plastocyanin/cytochrome c6-ferredoxin oxidoreductase, converting photonic excitation into a charge separation, which transfers an electron from the donor P700 chlorophyll pair to the spectroscopically characterized acceptors A0, A1, FX, FA and FB in turn. This chain is Photosystem I iron-sulfur center, found in Rhodomonas salina (Cryptomonas salina).